A 405-amino-acid chain; its full sequence is Corticosteroid-binding globulin (405 aa).

A signal peptide spans 1-22; that stretch reads MPLLLYTCLLWLPTSGLWTVQA. 3 N-linked (GlcNAc...) asparagine glycosylation sites follow: N31, N96, and N176. Residue Q254 participates in cortisol binding. An N-linked (GlcNAc...) asparagine glycan is attached at N260. N286 lines the cortisol pocket. Residues N330 and N369 are each glycosylated (N-linked (GlcNAc...) asparagine). Cortisol contacts are provided by H390 and W393.

Belongs to the serpin family. Post-translationally, N-glycosylated; binds 5 oligosaccharide chains. Glycosylation in position Asn-260 is needed for steroid binding. In terms of tissue distribution, plasma; synthesized in liver. Has also been identified in a number of glycocorticoid responsive cells.

The protein resides in the secreted. In terms of biological role, major transport protein for glucocorticoids and progestins in the blood of almost all vertebrate species. The polypeptide is Corticosteroid-binding globulin (SERPINA6) (Homo sapiens (Human)).